We begin with the raw amino-acid sequence, 540 residues long: Probable G-protein coupled receptor 75 (540 aa).

A compositionally biased stretch (polar residues) spans 1–15 (MNSTGHLQDAPNATS). The disordered stretch occupies residues 1-27 (MNSTGHLQDAPNATSLHVPHSQEGNST). Topologically, residues 1–46 (MNSTGHLQDAPNATSLHVPHSQEGNSTSLQEGLQDLIHTATLVTCT) are extracellular. N2, N12, and N25 each carry an N-linked (GlcNAc...) asparagine glycan. Residues 47-67 (FLLAVIFCLGSYGNFIVFLSF) traverse the membrane as a helical segment. Residues 68-86 (FDPAFRKFRTNFDFMILNL) are Cytoplasmic-facing. A helical membrane pass occupies residues 87-107 (SFCDLFICGVTAPMFTFVLFF). The Extracellular segment spans residues 108-120 (SSASSIPDAFCFT). The helical transmembrane segment at 121–141 (FHLTSSGFIIMSLKTVAVIAL) threads the bilayer. Residues 142–160 (HRLRMVLGKQPNRTASFPC) lie on the Cytoplasmic side of the membrane. Residues 161 to 181 (TVLLTLLLWATSFTLATLATL) form a helical membrane-spanning segment. At 182 to 205 (KTSKSHLCLPMSSLIAGKGKAILS) the chain is on the extracellular side. Residues 206–226 (LYVVDFTFCVAVVSVSYIMIA) form a helical membrane-spanning segment. The Cytoplasmic segment spans residues 227 to 318 (QTLRKNAQVR…INLSTAKDSK (92 aa)). Residues 319–339 (AVVTCVIIVLSVLVCCLPLGI) form a helical membrane-spanning segment. The Extracellular portion of the chain corresponds to 340-350 (SLVQVVLSSNG). Residues 351 to 371 (SFILYQFELFGFTLIFFKSGL) form a helical membrane-spanning segment. Residues 372–540 (NPFIYSRNSA…SAKQIPVPSV (169 aa)) lie on the Cytoplasmic side of the membrane.

It belongs to the G-protein coupled receptor 1 family. Expressed at high levels in brain and spinal cord and at detectable levels in retinal pigment epithelium. In situ hybridization of adult eye sections localized transcripts only to the perivascular cells, surrounding retinal arterioles, in the ganglion cell/nerve fiber layer. Also expressed by islet cells (at protein level).

The protein resides in the cell membrane. In terms of biological role, g protein-coupled receptor that is activated by the chemokine CCL5/RANTES. Probably coupled to heterotrimeric Gq proteins, it stimulates inositol trisphosphate production and calcium mobilization upon activation. Together with CCL5/RANTES, may play a role in neuron survival through activation of a downstream signaling pathway involving the PI3, Akt and MAP kinases. CCL5/RANTES may also regulate insulin secretion by pancreatic islet cells through activation of this receptor. The protein is Probable G-protein coupled receptor 75 (GPR75) of Homo sapiens (Human).